An 85-amino-acid polypeptide reads, in one-letter code: ATP synthase subunit c (85 aa).

Helical transmembrane passes span 10–30 (IAVA…FAVL) and 53–73 (FIIA…ALLF).

Belongs to the ATPase C chain family. F-type ATPases have 2 components, F(1) - the catalytic core - and F(0) - the membrane proton channel. F(1) has five subunits: alpha(3), beta(3), gamma(1), delta(1), epsilon(1). F(0) has three main subunits: a(1), b(2) and c(10-14). The alpha and beta chains form an alternating ring which encloses part of the gamma chain. F(1) is attached to F(0) by a central stalk formed by the gamma and epsilon chains, while a peripheral stalk is formed by the delta and b chains.

It is found in the cell inner membrane. Functionally, f(1)F(0) ATP synthase produces ATP from ADP in the presence of a proton or sodium gradient. F-type ATPases consist of two structural domains, F(1) containing the extramembraneous catalytic core and F(0) containing the membrane proton channel, linked together by a central stalk and a peripheral stalk. During catalysis, ATP synthesis in the catalytic domain of F(1) is coupled via a rotary mechanism of the central stalk subunits to proton translocation. Its function is as follows. Key component of the F(0) channel; it plays a direct role in translocation across the membrane. A homomeric c-ring of between 10-14 subunits forms the central stalk rotor element with the F(1) delta and epsilon subunits. This chain is ATP synthase subunit c, found in Vibrio cholerae serotype O1 (strain ATCC 39315 / El Tor Inaba N16961).